The chain runs to 471 residues: Eukaryotic translation initiation factor 3 subunit M (471 aa).

The disordered stretch occupies residues 39 to 61 (EISSLLEPLRQQEQSEEEPDRKQ). The 172-residue stretch at 206-377 (DFELAQSHVV…SEFLVHRATY (172 aa)) folds into the PCI domain. The tract at residues 419-471 (QAATEEANQGKSGEKGGKGGDRRRNPQHQQQQQQSQPSQPQQPRETELVAGAE) is disordered. The span at 430–442 (SGEKGGKGGDRRR) shows a compositional bias: basic and acidic residues. Positions 445-461 (QHQQQQQQSQPSQPQQP) are enriched in low complexity.

Belongs to the eIF-3 subunit M family. Component of the eukaryotic translation initiation factor 3 (eIF-3) complex.

It is found in the cytoplasm. Its function is as follows. Component of the eukaryotic translation initiation factor 3 (eIF-3) complex, which is involved in protein synthesis of a specialized repertoire of mRNAs and, together with other initiation factors, stimulates binding of mRNA and methionyl-tRNAi to the 40S ribosome. The eIF-3 complex specifically targets and initiates translation of a subset of mRNAs involved in cell proliferation. This is Eukaryotic translation initiation factor 3 subunit M from Aspergillus clavatus (strain ATCC 1007 / CBS 513.65 / DSM 816 / NCTC 3887 / NRRL 1 / QM 1276 / 107).